The primary structure comprises 781 residues: Poly(ADP-ribose) glycohydrolase 1 (781 aa).

Disordered regions lie at residues 28 to 87, 102 to 131, and 206 to 232; these read AHQV…VSEN, SLDN…NNKS, and ADST…DADS. Basic and acidic residues predominate over residues 106–121; the sequence is VTERSEHTLDNHKSTE.

Belongs to the poly(ADP-ribose) glycohydrolase family. In terms of tissue distribution, expressed in head and tail neurons. Also detected in the central nerve cord and motor neurons.

It localises to the nucleus. The catalysed reaction is [(1''-&gt;2')-ADP-alpha-D-ribose](n) + H2O = [(1''-&gt;2')-ADP-alpha-D-ribose](n-1) + ADP-D-ribose. Its function is as follows. Poly(ADP-ribose) synthesized after DNA damage is only present transiently and is rapidly degraded by poly(ADP-ribose) glycohydrolase. Poly(ADP-ribose) metabolism may be required for maintenance of the normal function of neuronal cells. The polypeptide is Poly(ADP-ribose) glycohydrolase 1 (Caenorhabditis elegans).